The primary structure comprises 378 residues: Cytochrome b (378 aa).

4 helical membrane passes run 34–54 (FGSL…FLAM), 78–99 (WLLR…YLHV), 114–134 (WLIG…GYVL), and 179–199 (FFTF…IHLL). The heme b site is built by H84 and H98. Heme b is bound by residues H183 and H197. An a ubiquinone-binding site is contributed by H202. 4 helical membrane-spanning segments follow: residues 227 to 247 (FKDI…VLIS), 289 to 309 (LGGV…PFYN), 321 to 341 (INQV…WIGA), and 348 to 368 (YVLI…VNPL).

Belongs to the cytochrome b family. The main subunits of complex b-c1 are: cytochrome b, cytochrome c1 and the Rieske protein. It depends on heme b as a cofactor.

The protein resides in the mitochondrion inner membrane. In terms of biological role, component of the ubiquinol-cytochrome c reductase complex (complex III or cytochrome b-c1 complex) that is part of the mitochondrial respiratory chain. The b-c1 complex mediates electron transfer from ubiquinol to cytochrome c. Contributes to the generation of a proton gradient across the mitochondrial membrane that is then used for ATP synthesis. This is Cytochrome b (mt:Cyt-b) from Drosophila simulans (Fruit fly).